The following is a 432-amino-acid chain: D-amino acid dehydrogenase 1 (432 aa).

FAD is bound at residue 3-17; sequence VLILGSGVVGTVSAY.

It belongs to the DadA oxidoreductase family. Requires FAD as cofactor.

The enzyme catalyses a D-alpha-amino acid + A + H2O = a 2-oxocarboxylate + AH2 + NH4(+). In terms of biological role, oxidative deamination of D-amino acids. The sequence is that of D-amino acid dehydrogenase 1 (dadA1) from Pseudomonas putida (strain ATCC 47054 / DSM 6125 / CFBP 8728 / NCIMB 11950 / KT2440).